The sequence spans 216 residues: Ras-related protein Rab-2B (216 aa).

Positions 16, 17, 18, 19, 20, and 21 each coordinate GDP. GTP-binding residues include G16, V17, G18, K19, S20, C21, and T38. S20 lines the Mg(2+) pocket. The Switch 1 motif lies at 37–42 (LTIGVE). Positions 38 and 61 each coordinate Mg(2+). The short motif at 63 to 72 (AGQESFRSIT) is the Switch 2 element. Positions 64, 119, 120, 122, 150, and 151 each coordinate GTP. A GDP-binding site is contributed by N119. Residues D122, A150, and K151 each contribute to the GDP site. The disordered stretch occupies residues 189–216 (PQQSISTSVGPSASQRNSRDIGSNSGCC). At S202 the chain carries Phosphoserine. S-geranylgeranyl cysteine attachment occurs at residues C215 and C216.

Belongs to the small GTPase superfamily. Rab family. Interacts (in GTP-bound form) with GARIN4 (via N-terminus). Interacts (in GTP-bound form) with GARIN5A. Interacts (in GTP-bound form) with GARIN1B. Interacts with VPS39 and VPS41. Mg(2+) serves as cofactor. Expressed in kidney, prostate, lung, liver, thymus, colon, pancreas, and skeletal muscle, and low levels in placenta. Not detected in heart, brain, spleen, testis, ovary, small intestine and leukocyte.

Its subcellular location is the cell membrane. The protein localises to the endoplasmic reticulum membrane. The protein resides in the golgi apparatus membrane. It is found in the cytoplasmic vesicle. It localises to the secretory vesicle. Its subcellular location is the acrosome. The protein localises to the autophagosome membrane. The catalysed reaction is GTP + H2O = GDP + phosphate + H(+). With respect to regulation, regulated by guanine nucleotide exchange factors (GEFs) which promote the exchange of bound GDP for free GTP, GTPase activating proteins (GAPs) which increase the GTP hydrolysis activity, and GDP dissociation inhibitors (GDIs) which inhibit the dissociation of the nucleotide from the GTPase. In terms of biological role, the small GTPases Rab are key regulators of intracellular membrane trafficking, from the formation of transport vesicles to their fusion with membranes. Rabs cycle between active GTP-bound and inactive GDP-bound states. In their active state, drive transport of vesicular carriers from donor organelles to acceptor organelles to regulate the membrane traffic that maintains organelle identity and morphology. Regulates the compacted morphology of the Golgi. Promotes cytosolic DNA-induced innate immune responses. Regulates IFN responses against DNA viruses by regulating the CGAS-STING signaling axis. Together with RAB2A redundantly required for efficient autophagic flux. The polypeptide is Ras-related protein Rab-2B (Homo sapiens (Human)).